We begin with the raw amino-acid sequence, 525 residues long: ATP synthase subunit alpha (525 aa).

Residue 169 to 176 (GDRQTGKT) coordinates ATP.

Belongs to the ATPase alpha/beta chains family. In terms of assembly, F-type ATPases have 2 components, CF(1) - the catalytic core - and CF(0) - the membrane proton channel. CF(1) has five subunits: alpha(3), beta(3), gamma(1), delta(1), epsilon(1). CF(0) has three main subunits: a(1), b(2) and c(9-12). The alpha and beta chains form an alternating ring which encloses part of the gamma chain. CF(1) is attached to CF(0) by a central stalk formed by the gamma and epsilon chains, while a peripheral stalk is formed by the delta and b chains.

The protein localises to the cell membrane. It catalyses the reaction ATP + H2O + 4 H(+)(in) = ADP + phosphate + 5 H(+)(out). Functionally, produces ATP from ADP in the presence of a proton gradient across the membrane. The alpha chain is a regulatory subunit. This chain is ATP synthase subunit alpha, found in Mycoplasma capricolum subsp. capricolum (strain California kid / ATCC 27343 / NCTC 10154).